The chain runs to 66 residues: Large ribosomal subunit protein bL35 (66 aa).

Residues 1-26 are compositionally biased toward basic residues; it reads MPKMKTHRGSAKRFKKTGSGKLKRSH. Positions 1–45 are disordered; that stretch reads MPKMKTHRGSAKRFKKTGSGKLKRSHAYTSHLFANKSQKQKRKLR.

It belongs to the bacterial ribosomal protein bL35 family.

The chain is Large ribosomal subunit protein bL35 from Bacillus velezensis (strain DSM 23117 / BGSC 10A6 / LMG 26770 / FZB42) (Bacillus amyloliquefaciens subsp. plantarum).